The primary structure comprises 280 residues: Retinoschisin (280 aa).

The signal sequence occupies residues 1–23 (MHLPREAFLLALAGAFIFPSSQQ). One can recognise an F5/8 type C domain in the interval 119 to 275 (CPYHRPLGFE…IALRLELLLC (157 aa)). 2 disulfides stabilise this stretch: cysteine 119-cysteine 275 and cysteine 166-cysteine 198.

As to quaternary structure, homooctamer of 4 homodimers; disulfide-linked. The homooctamer has a flat, cogwheel structure with a diameter of about 14 nm. Two stacked octamers can assemble to form a hexadecamer.

The protein resides in the secreted. It localises to the cell membrane. Functionally, binds negatively charged membrane lipids, such as phosphatidylserine and phosphoinositides. May play a role in cell-cell adhesion processes in the retina, via homomeric interaction between octamers present on the surface of two neighboring cells. Required for normal structure and function of the retina. This Takifugu rubripes (Japanese pufferfish) protein is Retinoschisin (xlrs1).